The primary structure comprises 130 residues: ATP synthase epsilon chain (130 aa).

It belongs to the ATPase epsilon chain family. As to quaternary structure, F-type ATPases have 2 components, CF(1) - the catalytic core - and CF(0) - the membrane proton channel. CF(1) has five subunits: alpha(3), beta(3), gamma(1), delta(1), epsilon(1). CF(0) has three main subunits: a, b and c.

It is found in the cell inner membrane. Its function is as follows. Produces ATP from ADP in the presence of a proton gradient across the membrane. The protein is ATP synthase epsilon chain of Pelagibacter ubique (strain HTCC1062).